The following is a 167-amino-acid chain: Fimbrial adapter PapF (167 aa).

The N-terminal stretch at 1–18 (MIRLSLFISLLLTSVAVL) is a signal peptide.

The protein localises to the secreted. Its subcellular location is the fimbrium. Functionally, adapter that links the PapG adhesin to the distal end of the tip fibrillum. PapF is required for the correct presentation of the adhesin at the distal end of the tip fibrillum. Pili are polar filaments radiating from the surface of the bacterium to a length of 0.5-1.5 micrometers and numbering 100-300 per cell, and enable bacteria to colonize the epithelium of specific host organs. The sequence is that of Fimbrial adapter PapF (papF) from Escherichia coli.